We begin with the raw amino-acid sequence, 329 residues long: Aspartate carbamoyltransferase catalytic subunit (329 aa).

Carbamoyl phosphate is bound by residues Arg-63 and Thr-64. Lys-91 contributes to the L-aspartate binding site. Residues Arg-113, His-141, and Gln-144 each coordinate carbamoyl phosphate. Arg-179 and Arg-234 together coordinate L-aspartate. Residues Gly-275 and Pro-276 each contribute to the carbamoyl phosphate site.

This sequence belongs to the aspartate/ornithine carbamoyltransferase superfamily. ATCase family. Heterododecamer (2C3:3R2) of six catalytic PyrB chains organized as two trimers (C3), and six regulatory PyrI chains organized as three dimers (R2).

The catalysed reaction is carbamoyl phosphate + L-aspartate = N-carbamoyl-L-aspartate + phosphate + H(+). It participates in pyrimidine metabolism; UMP biosynthesis via de novo pathway; (S)-dihydroorotate from bicarbonate: step 2/3. Functionally, catalyzes the condensation of carbamoyl phosphate and aspartate to form carbamoyl aspartate and inorganic phosphate, the committed step in the de novo pyrimidine nucleotide biosynthesis pathway. This chain is Aspartate carbamoyltransferase catalytic subunit, found in Magnetococcus marinus (strain ATCC BAA-1437 / JCM 17883 / MC-1).